Consider the following 376-residue polypeptide: E3 ubiquitin-protein ligase RNF133 (376 aa).

Positions 65 to 167 (SSTLKRVAGV…LKGTEIFHLI (103 aa)) constitute a PA domain. A helical transmembrane segment spans residues 190–210 (YLVSFVIVTTATLAYFIFYHI). The RING-type; atypical zinc finger occupies 256 to 297 (CVICFEHYKPNDIVRILTCKHFFHKNCIDPWILSHGTCPICK). The interval 328-376 (TLSPSEEETNNEVSPAGTSDKVIHVEENPTSQNNDSQPHSVVEDVHPSP) is disordered. The span at 355–366 (NPTSQNNDSQPH) shows a compositional bias: polar residues.

In terms of assembly, interacts with E3 ligase UBE2J1. In terms of processing, auto-ubiquitinated.

Its subcellular location is the endoplasmic reticulum membrane. It catalyses the reaction S-ubiquitinyl-[E2 ubiquitin-conjugating enzyme]-L-cysteine + [acceptor protein]-L-lysine = [E2 ubiquitin-conjugating enzyme]-L-cysteine + N(6)-ubiquitinyl-[acceptor protein]-L-lysine.. Its pathway is protein modification; protein ubiquitination. Its function is as follows. Has E3 ubiquitin-protein ligase activity. Plays a role in male fecundity through the interaction with the E2 ubituitin-protein ligase UBE2J1. This is E3 ubiquitin-protein ligase RNF133 (RNF133) from Macaca fascicularis (Crab-eating macaque).